Here is a 344-residue protein sequence, read N- to C-terminus: Phenylalanine--tRNA ligase alpha subunit (344 aa).

Glutamate 261 contacts Mg(2+).

This sequence belongs to the class-II aminoacyl-tRNA synthetase family. Phe-tRNA synthetase alpha subunit type 1 subfamily. In terms of assembly, tetramer of two alpha and two beta subunits. Requires Mg(2+) as cofactor.

It localises to the cytoplasm. It carries out the reaction tRNA(Phe) + L-phenylalanine + ATP = L-phenylalanyl-tRNA(Phe) + AMP + diphosphate + H(+). The sequence is that of Phenylalanine--tRNA ligase alpha subunit from Ehrlichia ruminantium (strain Gardel).